Reading from the N-terminus, the 495-residue chain is UDP-N-acetylmuramate--L-alanine ligase (495 aa).

Residue 120–126 (GSHGKTT) participates in ATP binding.

Belongs to the MurCDEF family.

It localises to the cytoplasm. The enzyme catalyses UDP-N-acetyl-alpha-D-muramate + L-alanine + ATP = UDP-N-acetyl-alpha-D-muramoyl-L-alanine + ADP + phosphate + H(+). Its pathway is cell wall biogenesis; peptidoglycan biosynthesis. Cell wall formation. This Rickettsia prowazekii (strain Madrid E) protein is UDP-N-acetylmuramate--L-alanine ligase.